We begin with the raw amino-acid sequence, 859 residues long: Active breakpoint cluster region-related protein (859 aa).

The segment at 31 to 84 (AEGHEEQKGPPEGSETMPYIDESPTMSPQLSARSQGGGESISPTPPEGLAPGVE) is disordered. Residues 54 to 64 (PTMSPQLSARS) show a composition bias toward polar residues. Serine 57 carries the post-translational modification Phosphoserine. Residues 91–284 (MRKLVLSGFL…QNFLSSINED (194 aa)) form the DH domain. One can recognise a PH domain in the interval 301-459 (QLVKDGFLVE…WREAIQKLQK (159 aa)). Residues 484 to 613 (TVHNIPVTSN…ESKNWHTDVI (130 aa)) enclose the C2 domain. A Rho-GAP domain is found at 647-845 (VKISVVTKRE…YYLQHPPISF (199 aa)).

As to quaternary structure, interacts with DLG4. In terms of tissue distribution, expressed in brain, including the cortex, hippocampus, cerebellum, and brainstem, as well as the spinal cord (at protein level).

It is found in the cell projection. Its subcellular location is the dendritic spine. The protein resides in the axon. It localises to the synapse. Functionally, protein with a unique structure having two opposing regulatory activities toward small GTP-binding proteins. The C-terminus is a GTPase-activating protein domain which stimulates GTP hydrolysis by RAC1, RAC2 and CDC42. Accelerates the intrinsic rate of GTP hydrolysis of RAC1 or CDC42, leading to down-regulation of the active GTP-bound form. The central Dbl homology (DH) domain functions as guanine nucleotide exchange factor (GEF) that modulates the GTPases CDC42, RHOA and RAC1. Promotes the conversion of CDC42, RHOA and RAC1 from the GDP-bound to the GTP-bound form. Functions as an important negative regulator of neuronal RAC1 activity. Regulates macrophage functions such as CSF-1 directed motility and phagocytosis through the modulation of RAC1 activity. The sequence is that of Active breakpoint cluster region-related protein from Rattus norvegicus (Rat).